We begin with the raw amino-acid sequence, 375 residues long: 2-methylcitrate synthase (375 aa).

Residues Lys72 and His187 each coordinate substrate. His222 is a catalytic residue. Lys255–Phe259 is a CoA binding site. His261 is an active-site residue. Arg270 serves as a coordination point for substrate. Asp312 is a catalytic residue. The substrate site is built by Arg337 and Arg356.

It belongs to the citrate synthase family. Homodimer.

It catalyses the reaction propanoyl-CoA + oxaloacetate + H2O = (2S,3S)-2-methylcitrate + CoA + H(+). The enzyme catalyses oxaloacetate + acetyl-CoA + H2O = citrate + CoA + H(+). Its pathway is organic acid metabolism; propanoate degradation. It functions in the pathway carbohydrate metabolism; tricarboxylic acid cycle; isocitrate from oxaloacetate: step 1/2. Functionally, involved in the catabolism of short chain fatty acids (SCFA) via the tricarboxylic acid (TCA)(acetyl degradation route) and via the 2-methylcitrate cycle II (propionate degradation route). Catalyzes the Claisen condensation of propionyl-CoA and oxaloacetate (OAA) to yield 2-methylcitrate (2-MC) and CoA. Catalyzes the condensation of oxaloacetate with acetyl-CoA. The chain is 2-methylcitrate synthase (prpC) from Shewanella oneidensis (strain ATCC 700550 / JCM 31522 / CIP 106686 / LMG 19005 / NCIMB 14063 / MR-1).